We begin with the raw amino-acid sequence, 581 residues long: MNHTPSPHMTEAAKSGAGLLCGLGLGPDRVRSPDSLTHTPSPSGGTPSSSPPLLLSPGLGCDGIGDWESREELRLRELEEARARAAQMEKTMRWWSDCTANWREKWSKVRAERNRARDEVRQLRQRLDALTKELTGARRERQELAAENEQLRLEAQRVRAEQSSPENASTAPESISSTASTHSNQPREAEIKQDNQDEEGVRDGPGSPEQEPVRDIGTDKLYKQKEMELLEALLRAKSEAPDSWDGRSASSLRSALSRQDRNRLLWEDLAALEEDTSKLNALQLRLDESQKVLLKEREDKHALIKNIEKLEAELSQWKLKYEELNKSKQEALKQLNLLKEVHQDELGRMSEDLEDELGARTNMDKKLAELRTEMERLQVENAAEWGRRERLETEKLALERENKKLRTQMEDLEEQLARKRRQAASALDTDLKTIQSELFERNKELADLRHVHSKVKKQYQEKMAELTHANRRVEQHEAEVKKLRLRVEELKKELGQAEDELDEAHNQTRKLQRSLDEQVEQSENLQVQLEHLQSRLRRQQNPGLFGKMRTSASSRFGPEDADGPPSDPDEDEEEELQLQIP.

Disordered stretches follow at residues Met-1–Cys-61, Gln-156–Asp-219, Gln-496–Glu-517, and Ser-534–Pro-581. Low complexity predominate over residues Thr-39–Leu-59. A coiled-coil region spans residues Arg-70–Ser-164. Residues Glu-161–Asn-184 are compositionally biased toward polar residues. Residues Gln-185–Arg-202 show a composition bias toward basic and acidic residues. A coiled-coil region spans residues Ala-270–Asn-541. Residues Glu-559–Pro-581 show a composition bias toward acidic residues.

This chain is Coiled-coil domain-containing protein 102A (ccdc102a), found in Danio rerio (Zebrafish).